Reading from the N-terminus, the 597-residue chain is Elongation factor 4 (597 aa).

A tr-type G domain is found at 2 to 184 (KHIRNFSIIA…EIVARIPAPV (183 aa)). GTP is bound by residues 14–19 (DHGKST) and 131–134 (NKID).

The protein belongs to the TRAFAC class translation factor GTPase superfamily. Classic translation factor GTPase family. LepA subfamily.

Its subcellular location is the cell inner membrane. The catalysed reaction is GTP + H2O = GDP + phosphate + H(+). In terms of biological role, required for accurate and efficient protein synthesis under certain stress conditions. May act as a fidelity factor of the translation reaction, by catalyzing a one-codon backward translocation of tRNAs on improperly translocated ribosomes. Back-translocation proceeds from a post-translocation (POST) complex to a pre-translocation (PRE) complex, thus giving elongation factor G a second chance to translocate the tRNAs correctly. Binds to ribosomes in a GTP-dependent manner. The chain is Elongation factor 4 from Aeromonas salmonicida (strain A449).